The primary structure comprises 405 residues: MKPLGTPLSPDATRVMLLGSGELGKEVLIALQRLGVETIAVDRYDNAPGQQVAHQSHTIAMSDPAALRTLIEAERPDLVVPEIEAIATQTLEALEAEGVVRVIPTARATRLTMDREGIRRLAAETLGLPTSPYRFCDSLAELQAAIDGADGQPAIGYPCIVKPVMSSSGKGQSKIDGPADVQAAWDYAMVGGRVSNGRVIVEGFIDFDYEITQLTVRALGADGQVETHFCDPIGHVQVRGDYVESWQPHPMQPAALALSRHIARTVTDNLGGQGLFGVELFVKGDLVWFSEVSPRPHDTGMVTMITQWQNEFELHARAILGLPVSTALKSPGASAVIYGGVDAPGVVYDGVDEALRVPNSEIRLFGKPESFERRRMGVALVHDADVDVARTQAKLAAGKVKARPA.

Residues 22–23 (EL) and glutamate 82 each bind N(1)-(5-phospho-beta-D-ribosyl)glycinamide. Residues arginine 115, lysine 162, 167-172 (SSGKGQ), 202-205 (EGFI), and glutamate 210 each bind ATP. Residues 120 to 320 (RLAAETLGLP…EFELHARAIL (201 aa)) form the ATP-grasp domain. Residues glutamate 279 and glutamate 291 each contribute to the Mg(2+) site. Residues aspartate 298, lysine 367, and 374–375 (RR) each bind N(1)-(5-phospho-beta-D-ribosyl)glycinamide.

The protein belongs to the PurK/PurT family. Homodimer.

It carries out the reaction N(1)-(5-phospho-beta-D-ribosyl)glycinamide + formate + ATP = N(2)-formyl-N(1)-(5-phospho-beta-D-ribosyl)glycinamide + ADP + phosphate + H(+). It functions in the pathway purine metabolism; IMP biosynthesis via de novo pathway; N(2)-formyl-N(1)-(5-phospho-D-ribosyl)glycinamide from N(1)-(5-phospho-D-ribosyl)glycinamide (formate route): step 1/1. Functionally, involved in the de novo purine biosynthesis. Catalyzes the transfer of formate to 5-phospho-ribosyl-glycinamide (GAR), producing 5-phospho-ribosyl-N-formylglycinamide (FGAR). Formate is provided by PurU via hydrolysis of 10-formyl-tetrahydrofolate. The polypeptide is Formate-dependent phosphoribosylglycinamide formyltransferase (Leptothrix cholodnii (strain ATCC 51168 / LMG 8142 / SP-6) (Leptothrix discophora (strain SP-6))).